A 297-amino-acid polypeptide reads, in one-letter code: MLYQQIAQNKRKTIFLILAFFFLLTAIGAAAGYLLVESYQFGIVLALILGSIYAFSMIFQSTNVVMGMNKAREITVDQAPDFFHIVEDMAMVAQIPMPKVYIIDDPSLNAFATGSSPENAAVAATSGLLQVMNREELEGVIGHEISHIRNYDIRISTIAVALASAITLIASMGSRMMWYGGGRQRQNDRDNSSLGIVFLIFSLLSLILAPLIASMVQLAISRQREYLADASSVELTRNPEGMIRALEKLSQSQPMSHPVDDASSALYINEPQKRESLSSLFSTHPPIADRIERLRHM.

Helical transmembrane passes span 14–34 and 39–59; these read IFLI…AGYL and YQFG…SMIF. A Zn(2+)-binding site is contributed by histidine 143. Residue glutamate 144 is part of the active site. Residue histidine 147 participates in Zn(2+) binding. Transmembrane regions (helical) follow at residues 153–173 and 196–216; these read IRIS…ASMG and IVFL…ASMV. Residue glutamate 225 coordinates Zn(2+).

This sequence belongs to the peptidase M48B family. The cofactor is Zn(2+).

The protein resides in the cell membrane. The polypeptide is Protease HtpX homolog (Streptococcus uberis (strain ATCC BAA-854 / 0140J)).